A 2309-amino-acid polypeptide reads, in one-letter code: Collagen alpha-4(VI) chain (2309 aa).

The N-terminal stretch at 1-22 is a signal peptide; it reads MGTWKTFWLIISLAAGLGFVKS. The interval 21–1410 is nonhelical region; the sequence is KSQRIVCREA…TCCNMYAKCY (1390 aa). VWFA domains follow at residues 34-206, 235-413, 430-653, 634-811, 849-1018, and 1030-1199; these read DIVF…AQKL, DIVF…LQAL, DVVF…FQRV, DLVF…GNKL, DIYF…IRDI, and DIIF…EKEI. Asn-188 is a glycosylation site (N-linked (GlcNAc...) asparagine). Asn-754 is a glycosylation site (N-linked (GlcNAc...) asparagine). An N-linked (GlcNAc...) asparagine glycan is attached at Asn-1114. The segment at 1411 to 1744 is triple-helical region; the sequence is GDDGIRGEPG…GKMGTKGSKG (334 aa). A compositionally biased stretch (basic and acidic residues) spans 1414–1430; the sequence is GIRGEPGSRGEQGERGL. The interval 1414–1746 is disordered; the sequence is GIRGEPGSRG…MGTKGSKGLA (333 aa). Residues 1480–1489 show a composition bias toward gly residues; it reads GEEGVGGLDG. The Cell attachment site motif lies at 1527-1529; sequence RGD. 2 stretches are compositionally biased toward low complexity: residues 1605–1621 and 1650–1669; these read PRGR…KGDP and PAGE…PGLF. Positions 1745-2309 are nonhelical region; the sequence is LADRTPCEIV…EGECLNYVLK (565 aa). 2 VWFA domains span residues 1776–1957 and 1982–2187; these read EVVF…ASCT and DLVF…LNLL. The Cell attachment site motif lies at 2208–2210; sequence RGD. The disordered stretch occupies residues 2262–2300; that stretch reads ALGSHGKDRADTEDIDQETPAKGRHLGPTHGPCPMGPEE.

This sequence belongs to the type VI collagen family. As to quaternary structure, trimers composed of three different chains: alpha-1(VI), alpha-2(VI), and alpha-3(VI) or alpha-4(VI) or alpha-5(VI) or alpha-6(VI). Post-translationally, prolines at the third position of the tripeptide repeating unit (G-X-Y) are hydroxylated in some or all of the chains. In newborn, it is expressed in lung, kidney, brain, intestine, skin, sternum and, at weak level, calvaria. In adult, it is almost absent with some weak expression in ovary and very weak expression in spleen, lung, uterus and brain.

Its subcellular location is the secreted. The protein localises to the extracellular space. It is found in the extracellular matrix. Its function is as follows. Collagen VI acts as a cell-binding protein. This chain is Collagen alpha-4(VI) chain (Col6a4), found in Mus musculus (Mouse).